Consider the following 251-residue polypeptide: Probable transcriptional regulatory protein cgR_1708 (251 aa).

Positions methionine 1–glycine 22 are disordered.

It belongs to the TACO1 family.

The protein resides in the cytoplasm. The sequence is that of Probable transcriptional regulatory protein cgR_1708 from Corynebacterium glutamicum (strain R).